The primary structure comprises 346 residues: Dimethyladenosine transferase 1, mitochondrial (346 aa).

The transit peptide at 1–27 (MATQGVLAKYRLPPLPTIGEIIKLFNL) directs the protein to the mitochondrion. S-adenosyl-L-methionine contacts are provided by asparagine 36, leucine 38, glycine 63, glutamate 85, lysine 86, aspartate 111, isoleucine 112, and asparagine 141.

Belongs to the class I-like SAM-binding methyltransferase superfamily. rRNA adenine N(6)-methyltransferase family. KsgA subfamily.

It localises to the mitochondrion. It catalyses the reaction adenosine(N)/adenosine(N+1) in rRNA + 4 S-adenosyl-L-methionine = N(6)-dimethyladenosine(N)/N(6)-dimethyladenosine(N+1) in rRNA + 4 S-adenosyl-L-homocysteine + 4 H(+). Its function is as follows. Mitochondrial methyltransferase which uses S-adenosyl methionine to dimethylate two highly conserved adjacent adenosine residues (A1583 and A1584) within the loop of helix 45 at the 3-prime end of 12S rRNA, thereby regulating the assembly or stability of the small subunit of the mitochondrial ribosome. Also required for basal transcription of mitochondrial DNA, probably via its interaction with POLRMT and TFAM. Stimulates transcription independently of the methyltransferase activity. This chain is Dimethyladenosine transferase 1, mitochondrial (tfb1m), found in Xenopus tropicalis (Western clawed frog).